We begin with the raw amino-acid sequence, 222 residues long: Endonuclease V (222 aa).

Mg(2+)-binding residues include D34 and D102.

This sequence belongs to the endonuclease V family. Mg(2+) serves as cofactor.

It is found in the cytoplasm. The enzyme catalyses Endonucleolytic cleavage at apurinic or apyrimidinic sites to products with a 5'-phosphate.. DNA repair enzyme involved in the repair of deaminated bases. Selectively cleaves double-stranded DNA at the second phosphodiester bond 3' to a deoxyinosine leaving behind the intact lesion on the nicked DNA. The sequence is that of Endonuclease V from Proteus mirabilis (strain HI4320).